Consider the following 1183-residue polypeptide: Translation initiation factor IF-2 (1183 aa).

Disordered stretches follow at residues Lys55–Ile512 and Ala538–Arg574. A compositionally biased stretch (basic and acidic residues) spans Thr83–Thr99. Polar residues-rich tracts occupy residues Glu100–Ala143 and Lys165–Ser177. Basic and acidic residues predominate over residues Pro220–Pro229. A compositionally biased stretch (polar residues) spans Gln231 to Gly252. Positions Gln253–Gln267 are enriched in low complexity. The span at Ile288–Asn304 shows a compositional bias: basic and acidic residues. 2 stretches are compositionally biased toward polar residues: residues Gln324–Gly349 and Asn357–Gly367. Residues Gly485–Arg499 are compositionally biased toward basic and acidic residues. Basic residues-rich tracts occupy residues Ser544–Asn553 and Leu560–Arg574. Positions Arg675 to Leu847 constitute a tr-type G domain. The tract at residues Gly684–Thr691 is G1. A GTP-binding site is contributed by Gly684–Thr691. The G2 stretch occupies residues Gly709–His713. Positions Asp734–Gly737 are G3. GTP contacts are provided by residues Asp734–His738 and Asn788–Asp791. The interval Asn788 to Asp791 is G4. The tract at residues Ser824–Ile826 is G5.

Belongs to the TRAFAC class translation factor GTPase superfamily. Classic translation factor GTPase family. IF-2 subfamily.

The protein localises to the cytoplasm. Its function is as follows. One of the essential components for the initiation of protein synthesis. Protects formylmethionyl-tRNA from spontaneous hydrolysis and promotes its binding to the 30S ribosomal subunits. Also involved in the hydrolysis of GTP during the formation of the 70S ribosomal complex. The polypeptide is Translation initiation factor IF-2 (Prochlorococcus marinus (strain NATL1A)).